Reading from the N-terminus, the 443-residue chain is Structure-specific endonuclease subunit SLX1 (443 aa).

One can recognise a GIY-YIG domain in the interval 13 to 93 (RVYVCYCLRS…QKPHASRHLR (81 aa)). Positions 121–140 (FPATRSSAPSSAASHDSGLN) are disordered. An SLX1-type zinc finger spans residues 361–419 (CGLCGGHINRHVPLSYTHCPHACDAVFHLTCLARYSLEQETRAHARTFCLPTSAWCPMC).

Belongs to the SLX1 family. In terms of assembly, forms a heterodimer with SLX4. Requires a divalent metal cation as cofactor.

The protein localises to the nucleus. Its function is as follows. Catalytic subunit of the SLX1-SLX4 structure-specific endonuclease that resolves DNA secondary structures generated during DNA repair and recombination. Has endonuclease activity towards branched DNA substrates, introducing single-strand cuts in duplex DNA close to junctions with ss-DNA. This Malassezia globosa (strain ATCC MYA-4612 / CBS 7966) (Dandruff-associated fungus) protein is Structure-specific endonuclease subunit SLX1.